The primary structure comprises 268 residues: Ribosomal RNA small subunit methyltransferase A (268 aa).

6 residues coordinate S-adenosyl-L-methionine: Asn18, Leu20, Gly45, Glu66, Asp91, and Asn112.

The protein belongs to the class I-like SAM-binding methyltransferase superfamily. rRNA adenine N(6)-methyltransferase family. RsmA subfamily.

Its subcellular location is the cytoplasm. It catalyses the reaction adenosine(1518)/adenosine(1519) in 16S rRNA + 4 S-adenosyl-L-methionine = N(6)-dimethyladenosine(1518)/N(6)-dimethyladenosine(1519) in 16S rRNA + 4 S-adenosyl-L-homocysteine + 4 H(+). Functionally, specifically dimethylates two adjacent adenosines (A1518 and A1519) in the loop of a conserved hairpin near the 3'-end of 16S rRNA in the 30S particle. May play a critical role in biogenesis of 30S subunits. This is Ribosomal RNA small subunit methyltransferase A from Shewanella baltica (strain OS223).